The chain runs to 369 residues: Peptidyl-prolyl cis-trans isomerase D (369 aa).

The PPIase cyclophilin-type domain maps to 8–173 (YFDLSIGGKP…ADVRIDACGI (166 aa)). TPR repeat units lie at residues 218–251 (VEAVKAIGTAQLQAARFDVAVQKYAKAAGFLQEY), 269–302 (VAVHLNLALAALKAGNHQRVLSAASEVLHGAADD), and 306–339 (AKALYRRGLAYHHLKDPEMALTDLELAATYQPGD).

The protein belongs to the cyclophilin-type PPIase family. PPIase D subfamily.

Its subcellular location is the cytoplasm. It catalyses the reaction [protein]-peptidylproline (omega=180) = [protein]-peptidylproline (omega=0). PPIases accelerate the folding of proteins. It catalyzes the cis-trans isomerization of proline imidic peptide bonds in oligopeptides. In Eremothecium gossypii (strain ATCC 10895 / CBS 109.51 / FGSC 9923 / NRRL Y-1056) (Yeast), this protein is Peptidyl-prolyl cis-trans isomerase D (CPR6).